A 181-amino-acid polypeptide reads, in one-letter code: Malignant T-cell-amplified sequence 2 (181 aa).

In terms of domain architecture, PUA spans 92–171; sequence LPHQQVDKGA…IGIENIHYLN (80 aa).

It belongs to the MCTS1 family.

The protein localises to the cytoplasm. The chain is Malignant T-cell-amplified sequence 2 from Homo sapiens (Human).